The following is a 302-amino-acid chain: Cobalt-precorrin-6A reductase (302 aa).

A compositionally biased stretch (basic and acidic residues) spans 1–10 (MQTPEIKEGT). Positions 1–37 (MQTPEIKEGTEQYLWRRKTMNPGDKGVKRKGSDRQRE) are disordered.

This sequence belongs to the precorrin-6x reductase family.

It carries out the reaction Co-precorrin-6B + NAD(+) = Co-precorrin-6A + NADH + H(+). The protein operates within cofactor biosynthesis; adenosylcobalamin biosynthesis; cob(II)yrinate a,c-diamide from sirohydrochlorin (anaerobic route): step 7/10. Catalyzes the reduction of the macrocycle of cobalt-precorrin-6A to cobalt-precorrin-6B. In Methanothermobacter thermautotrophicus (strain ATCC 29096 / DSM 1053 / JCM 10044 / NBRC 100330 / Delta H) (Methanobacterium thermoautotrophicum), this protein is Cobalt-precorrin-6A reductase (cbiJ).